The following is a 320-amino-acid chain: MTYSVSPSSLLTEYGNDNICRVLALDGGGAKGFYTLGVLKEIEAMLGCPLYKRFDLVFGTSTGAIIAALIALGYEVDQIHALYTEHVPRVMSSRSAAARTMALQDLAKEVFQDKTFEDVLMGIGIVATRWMTERPMIFKGNVVQAHGRKGTFSPGFGVSIADAVQASCSAYPFFERKVIVTAAGDKVELIDGGYCANNPTLFAIADATVALKKDHKDIRVINVGVGIYPEPKPGLLMRIAKKWLAVQLLQKTLEINTQSMDQLRDILFKDIPTIRISDTFERPEMATDLLEYNLDKLNTLRQRGRESFGAREAQLREFLI.

The PNPLA domain maps to 23-204; sequence LALDGGGAKG…CANNPTLFAI (182 aa). A GXGXXG motif is present at residues 27–32; sequence GGGAKG. Positions 59 to 63 match the GXSXG motif; sequence GTSTG. Ser-61 acts as the Nucleophile in catalysis. Asp-191 serves as the catalytic Proton acceptor. Positions 191–193 match the DGA/G motif; sequence DGG.

Belongs to the patatin family.

It catalyses the reaction a 1,2-diacyl-sn-glycero-3-phosphocholine + H2O = a 2-acyl-sn-glycero-3-phosphocholine + a fatty acid + H(+). With respect to regulation, phospholipase activity is specifically activated upon 3',3'-cUAMP binding. Is not activated by the other cyclic dinucleotides 3',3'-cGAMP, 3',3'-c-diAMP and 3',3'-c-diGMP. Therefore, is specifically activated by only the nucleotide synthesized from its adjacently encoded nucleotidyltransferase (CdnE). Functionally, effector phospholipase of a CBASS antivirus system. CBASS (cyclic oligonucleotide-based antiphage signaling system) provides immunity against bacteriophage. The CD-NTase protein synthesizes cyclic nucleotides in response to infection; these serve as specific second messenger signals. The signals activate a diverse range of effectors, leading to bacterial cell death and thus abortive phage infection. A type II-A(UA) CBASS system. Its function is as follows. Phospholipase that is activated upon binding to the cyclic dinucleotide (CDN) second messenger 3',3'-cyclic UMP-AMP (3',3'-cUAMP). The sequence is that of cUMP-AMP-activated phospholipase from Escherichia coli.